Here is a 255-residue protein sequence, read N- to C-terminus: Dehydrogenase/reductase SDR family member 11 (255 aa).

Residues 1–23 (MERWTGRVALVTGASVGIGAAVA) form the signal peptide. Residues 13 to 18 (GASVGI), 38 to 39 (RS), Glu-44, 65 to 66 (DL), and Asn-92 each bind NADP(+). Ser-146 and Tyr-161 together coordinate substrate. Residues Tyr-161, Lys-165, 196-199 (VETG), and Lys-203 contribute to the NADP(+) site. Tyr-161 serves as the catalytic Proton acceptor.

It belongs to the short-chain dehydrogenases/reductases (SDR) family.

It localises to the secreted. The catalysed reaction is a 3beta-hydroxysteroid + NADP(+) = a 3-oxosteroid + NADPH + H(+). The enzyme catalyses 17beta-estradiol + NAD(+) = estrone + NADH + H(+). It carries out the reaction 17beta-estradiol + NADP(+) = estrone + NADPH + H(+). It functions in the pathway steroid biosynthesis; estrogen biosynthesis. Inhibited by flavonoids including apigenin, luteolin, genistein, kaempferol and quercetin and also by carbenoxolone, zearalenone, glycyrrhetinic, curcumin and flufenamic acid. In terms of biological role, catalyzes the conversion of the 17-keto group of estrone, 4- and 5-androstenes and 5-alpha-androstanes into their 17-beta-hydroxyl metabolites and the conversion of the 3-keto group of 3-, 3,17- and 3,20- diketosteroids into their 3-hydroxyl metabolites. Exhibits reductive 3-beta-hydroxysteroid dehydrogenase activity toward 5-beta-androstanes, 5-beta-pregnanes, 4-pregnenes and bile acids. May also reduce endogenous and exogenous alpha-dicarbonyl compounds and xenobiotic alicyclic ketones. The polypeptide is Dehydrogenase/reductase SDR family member 11 (DHRS11) (Gallus gallus (Chicken)).